A 269-amino-acid polypeptide reads, in one-letter code: uncharacterized protein (269 aa).

Positions 3–105 form a DNA-binding region, ompR/PhoB-type; it reads WIINDNIEFW…VPRRGFKIHN (103 aa).

It to V.cholerae cholera toxin transcriptional activator (ToxR).

This is an uncharacterized protein from Escherichia coli (strain K12).